Here is a 115-residue protein sequence, read N- to C-terminus: U3-lycotoxin-Ls1a (115 aa).

The N-terminal stretch at 1-20 (MKFVLLFGVFLVTLFSYSSA) is a signal peptide. Positions 21–44 (EMLDDFGQADEDELLSLIEKEEAR) are excised as a propeptide. 4 disulfide bridges follow: Cys-48–Cys-63, Cys-55–Cys-72, Cys-62–Cys-87, and Cys-74–Cys-85.

Belongs to the neurotoxin 19 (CSTX) family. 01 subfamily. In terms of tissue distribution, expressed by the venom gland.

The protein localises to the secreted. This is U3-lycotoxin-Ls1a from Lycosa singoriensis (Wolf spider).